Here is a 367-residue protein sequence, read N- to C-terminus: Phosphoribosylaminoimidazole-succinocarboxamide synthase (367 aa).

Belongs to the SAICAR synthetase family.

The enzyme catalyses 5-amino-1-(5-phospho-D-ribosyl)imidazole-4-carboxylate + L-aspartate + ATP = (2S)-2-[5-amino-1-(5-phospho-beta-D-ribosyl)imidazole-4-carboxamido]succinate + ADP + phosphate + 2 H(+). It participates in purine metabolism; IMP biosynthesis via de novo pathway; 5-amino-1-(5-phospho-D-ribosyl)imidazole-4-carboxamide from 5-amino-1-(5-phospho-D-ribosyl)imidazole-4-carboxylate: step 1/2. This is Phosphoribosylaminoimidazole-succinocarboxamide synthase from Vibrio parahaemolyticus serotype O3:K6 (strain RIMD 2210633).